The sequence spans 221 residues: Iron-sulfur cluster repair protein YtfE (221 aa).

Belongs to the RIC family. YtfE subfamily. As to quaternary structure, homodimer.

The protein localises to the cytoplasm. In terms of biological role, di-iron-containing protein involved in the repair of iron-sulfur clusters damaged by oxidative and nitrosative stress conditions. The chain is Iron-sulfur cluster repair protein YtfE from Yersinia pestis bv. Antiqua (strain Antiqua).